We begin with the raw amino-acid sequence, 324 residues long: Nucleotide-binding protein GbCGDNIH1_0395 (324 aa).

Residue 14-21 (GLSGAGKS) coordinates ATP. 59 to 62 (DARS) serves as a coordination point for GTP. Residues 286 to 324 (ISDDAPQAGAARVSTDDRNGRPEEHGSAQAPDELSRTTS) form a disordered region. A compositionally biased stretch (basic and acidic residues) spans 299–311 (STDDRNGRPEEHG).

Belongs to the RapZ-like family.

In terms of biological role, displays ATPase and GTPase activities. This Granulibacter bethesdensis (strain ATCC BAA-1260 / CGDNIH1) protein is Nucleotide-binding protein GbCGDNIH1_0395.